The sequence spans 314 residues: Methionyl-tRNA formyltransferase (314 aa).

Residue S111–P114 participates in (6S)-5,6,7,8-tetrahydrofolate binding.

It belongs to the Fmt family.

The catalysed reaction is L-methionyl-tRNA(fMet) + (6R)-10-formyltetrahydrofolate = N-formyl-L-methionyl-tRNA(fMet) + (6S)-5,6,7,8-tetrahydrofolate + H(+). Its function is as follows. Attaches a formyl group to the free amino group of methionyl-tRNA(fMet). The formyl group appears to play a dual role in the initiator identity of N-formylmethionyl-tRNA by promoting its recognition by IF2 and preventing the misappropriation of this tRNA by the elongation apparatus. The chain is Methionyl-tRNA formyltransferase from Coxiella burnetii (strain CbuG_Q212) (Coxiella burnetii (strain Q212)).